The primary structure comprises 1061 residues: Bifunctional cytochrome P450/NADPH--P450 reductase 1 (1061 aa).

The cytochrome P450 stretch occupies residues 1-475 (MKETSPIPQP…AEKAAPDEQK (475 aa)). Cys403 is a binding site for heme. The NADPH--P450 reductase stretch occupies residues 476 to 1061 (EKTEAKGASV…MYAKDVWAGI (586 aa)). In terms of domain architecture, Flavodoxin-like spans 493-632 (LLVLYGSDTG…QLDEWKKSMW (140 aa)). Residues 499–504 (SDTGTA), 546–549 (SYNG), 580–582 (CGD), and 588–590 (TYQ) contribute to the FMN site. Residues 671-904 (YEASHASIAE…RTPESRFQLP (234 aa)) enclose the FAD-binding FR-type domain.

It in the N-terminal section; belongs to the cytochrome P450 family. FAD serves as cofactor. FMN is required as a cofactor. It depends on heme b as a cofactor.

Its subcellular location is the cytoplasm. The enzyme catalyses an organic molecule + reduced [NADPH--hemoprotein reductase] + O2 = an alcohol + oxidized [NADPH--hemoprotein reductase] + H2O + H(+). The catalysed reaction is 2 oxidized [cytochrome P450] + NADPH = 2 reduced [cytochrome P450] + NADP(+) + H(+). Functionally, functions as a fatty acid monooxygenase. Catalyzes hydroxylation of a range of long-chain fatty acids, with a preference for long-chain unsaturated and branched-chain fatty acids over saturated fatty acids. Hydroxylation of myristic acid occurs mainly at the omega-2 position. Also displays a NADPH-dependent reductase activity in the C-terminal domain, which allows electron transfer from NADPH to the heme iron of the cytochrome P450 N-terminal domain. Is also able to catalyze efficient oxidation of sodium dodecyl sulfate (SDS). The polypeptide is Bifunctional cytochrome P450/NADPH--P450 reductase 1 (Bacillus subtilis (strain 168)).